The sequence spans 404 residues: UPF0261 protein CTC_01794 (404 aa).

It belongs to the UPF0261 family.

In Clostridium tetani (strain Massachusetts / E88), this protein is UPF0261 protein CTC_01794.